A 120-amino-acid polypeptide reads, in one-letter code: Large ribosomal subunit protein uL18 (120 aa).

Belongs to the universal ribosomal protein uL18 family. As to quaternary structure, part of the 50S ribosomal subunit; part of the 5S rRNA/L5/L18/L25 subcomplex. Contacts the 5S and 23S rRNAs.

This is one of the proteins that bind and probably mediate the attachment of the 5S RNA into the large ribosomal subunit, where it forms part of the central protuberance. This Treponema pallidum (strain Nichols) protein is Large ribosomal subunit protein uL18.